Here is a 217-residue protein sequence, read N- to C-terminus: Protein LURP-one-related 2 (217 aa).

The protein belongs to the LOR family.

Might be related to the phospholipid scramblase and tubby-like superfamily of membrane tethered transcription factors. In Arabidopsis thaliana (Mouse-ear cress), this protein is Protein LURP-one-related 2.